The following is a 246-amino-acid chain: UDP-N-acetyl-D-mannosaminuronic acid transferase (246 aa).

It belongs to the glycosyltransferase 26 family.

It carries out the reaction UDP-N-acetyl-alpha-D-mannosaminouronate + N-acetyl-alpha-D-glucosaminyl-di-trans,octa-cis-undecaprenyl diphosphate = beta-D-ManNAcA-(1-&gt;4)-alpha-D-GlcNAc-di-trans,octa-cis-undecaprenyl diphosphate + UDP + H(+). It functions in the pathway bacterial outer membrane biogenesis; enterobacterial common antigen biosynthesis. Its function is as follows. Catalyzes the synthesis of Und-PP-GlcNAc-ManNAcA (Lipid II), the second lipid-linked intermediate involved in enterobacterial common antigen (ECA) synthesis. The sequence is that of UDP-N-acetyl-D-mannosaminuronic acid transferase from Salmonella schwarzengrund (strain CVM19633).